The chain runs to 321 residues: Carbonic anhydrase, chloroplastic (321 aa).

Residues 1-100 (MSTASINSCL…AAARVDQITA (100 aa)) constitute a chloroplast transit peptide.

This sequence belongs to the beta-class carbonic anhydrase family. Homohexamer.

It is found in the plastid. Its subcellular location is the chloroplast stroma. The catalysed reaction is hydrogencarbonate + H(+) = CO2 + H2O. Its function is as follows. Reversible hydration of carbon dioxide. In Nicotiana tabacum (Common tobacco), this protein is Carbonic anhydrase, chloroplastic.